The following is a 454-amino-acid chain: Glutamine synthetase (454 aa).

The GS beta-grasp domain maps to Gln-25 to Gly-111. Residues Pro-118–Phe-454 form the GS catalytic domain. Mg(2+) contacts are provided by Glu-141 and Glu-143. Glu-193 is a binding site for ATP. Residues Glu-198 and Glu-205 each coordinate Mg(2+). L-glutamate-binding positions include Asn-249 to Gly-250 and Gly-250. His-254 lines the Mg(2+) pocket. Residues His-256–Ser-258 and Ser-258 contribute to the ATP site. The L-glutamate site is built by Arg-308, Glu-314, and Arg-326. ATP contacts are provided by Arg-326 and Arg-331. Position 343 (Glu-343) interacts with Mg(2+). An L-glutamate-binding site is contributed by Arg-345.

Belongs to the glutamine synthetase family. In terms of assembly, oligomer of 12 subunits arranged in the form of two hexagons. In its feedback-inhibited form, interacts with TnrA in order to block its DNA-binding activity. Mg(2+) is required as a cofactor.

Its subcellular location is the cytoplasm. The enzyme catalyses L-glutamate + NH4(+) + ATP = L-glutamine + ADP + phosphate + H(+). Inhibited by glutamine. Glutamine synthetase (GS) is an unusual multitasking protein that functions as an enzyme, a transcription coregulator, and a chaperone in ammonium assimilation and in the regulation of genes involved in nitrogen metabolism. It catalyzes the ATP-dependent biosynthesis of glutamine from glutamate and ammonia. Feedback-inhibited GlnA also interacts with and regulates the activity of the transcriptional regulator TnrA. During nitrogen limitation, TnrA is in its DNA-binding active state and turns on the transcription of genes required for nitrogen assimilation. Under conditions of nitrogen excess, feedback-inhibited GlnA forms a stable complex with TnrA, which inhibits its DNA-binding activity. In contrast, feedback-inhibited GlnA acts as a chaperone to stabilize the DNA-binding activity of GlnR, which represses the transcription of nitrogen assimilation genes. This chain is Glutamine synthetase, found in Halobacterium salinarum (strain ATCC 700922 / JCM 11081 / NRC-1) (Halobacterium halobium).